The following is a 427-amino-acid chain: 3-phosphoshikimate 1-carboxyvinyltransferase (427 aa).

3-phosphoshikimate contacts are provided by Lys20, Ser21, and Arg25. Lys20 lines the phosphoenolpyruvate pocket. 2 residues coordinate phosphoenolpyruvate: Gly92 and Arg120. 3-phosphoshikimate is bound by residues Ser166, Gln168, Asp312, and Lys339. Gln168 contacts phosphoenolpyruvate. Asp312 (proton acceptor) is an active-site residue. Phosphoenolpyruvate is bound by residues Arg343 and Arg385.

It belongs to the EPSP synthase family. As to quaternary structure, monomer.

It is found in the cytoplasm. It catalyses the reaction 3-phosphoshikimate + phosphoenolpyruvate = 5-O-(1-carboxyvinyl)-3-phosphoshikimate + phosphate. The protein operates within metabolic intermediate biosynthesis; chorismate biosynthesis; chorismate from D-erythrose 4-phosphate and phosphoenolpyruvate: step 6/7. Its function is as follows. Catalyzes the transfer of the enolpyruvyl moiety of phosphoenolpyruvate (PEP) to the 5-hydroxyl of shikimate-3-phosphate (S3P) to produce enolpyruvyl shikimate-3-phosphate and inorganic phosphate. This Streptococcus pyogenes serotype M49 (strain NZ131) protein is 3-phosphoshikimate 1-carboxyvinyltransferase.